A 203-amino-acid chain; its full sequence is MIFSVRGEVLEVALDHAVIEAAGIGYRVNATPSALATLRQGSQARLVTAMVVREDSMTLYGFSDAENRDLFLALLSVSGVGPRLAMATLAVHDAAALRQALADSDVASLTRVPGIGKRGAERIVLELRDKVGPVGASGLTVGTAADGNAVRGSVVEALVGLGFAAKQAEEATDQVLDGELGKDGAVATSSALRAALSLLGKTR.

Residues 1 to 63 are domain I; the sequence is MIFSVRGEVL…EDSMTLYGFS (63 aa). The interval 64 to 141 is domain II; that stretch reads DAENRDLFLA…GPVGASGLTV (78 aa). Residues 141–145 form a flexible linker region; that stretch reads VGTAA. Residues 146-203 are domain III; sequence DGNAVRGSVVEALVGLGFAAKQAEEATDQVLDGELGKDGAVATSSALRAALSLLGKTR.

Belongs to the RuvA family. As to quaternary structure, homotetramer. Forms an RuvA(8)-RuvB(12)-Holliday junction (HJ) complex. HJ DNA is sandwiched between 2 RuvA tetramers; dsDNA enters through RuvA and exits via RuvB. An RuvB hexamer assembles on each DNA strand where it exits the tetramer. Each RuvB hexamer is contacted by two RuvA subunits (via domain III) on 2 adjacent RuvB subunits; this complex drives branch migration. In the full resolvosome a probable DNA-RuvA(4)-RuvB(12)-RuvC(2) complex forms which resolves the HJ.

Its subcellular location is the cytoplasm. Functionally, the RuvA-RuvB-RuvC complex processes Holliday junction (HJ) DNA during genetic recombination and DNA repair, while the RuvA-RuvB complex plays an important role in the rescue of blocked DNA replication forks via replication fork reversal (RFR). RuvA specifically binds to HJ cruciform DNA, conferring on it an open structure. The RuvB hexamer acts as an ATP-dependent pump, pulling dsDNA into and through the RuvAB complex. HJ branch migration allows RuvC to scan DNA until it finds its consensus sequence, where it cleaves and resolves the cruciform DNA. The polypeptide is Holliday junction branch migration complex subunit RuvA (Mycobacterium leprae (strain Br4923)).